A 407-amino-acid chain; its full sequence is 4-hydroxy-3-methylbut-2-en-1-yl diphosphate synthase (ferredoxin) (407 aa).

Cysteine 312, cysteine 315, cysteine 346, and glutamate 353 together coordinate [4Fe-4S] cluster.

Belongs to the IspG family. [4Fe-4S] cluster is required as a cofactor.

The catalysed reaction is (2E)-4-hydroxy-3-methylbut-2-enyl diphosphate + 2 oxidized [2Fe-2S]-[ferredoxin] + H2O = 2-C-methyl-D-erythritol 2,4-cyclic diphosphate + 2 reduced [2Fe-2S]-[ferredoxin] + H(+). It participates in isoprenoid biosynthesis; isopentenyl diphosphate biosynthesis via DXP pathway; isopentenyl diphosphate from 1-deoxy-D-xylulose 5-phosphate: step 5/6. Its function is as follows. Converts 2C-methyl-D-erythritol 2,4-cyclodiphosphate (ME-2,4cPP) into 1-hydroxy-2-methyl-2-(E)-butenyl 4-diphosphate. The sequence is that of 4-hydroxy-3-methylbut-2-en-1-yl diphosphate synthase (ferredoxin) from Synechococcus elongatus (strain ATCC 33912 / PCC 7942 / FACHB-805) (Anacystis nidulans R2).